Here is a 496-residue protein sequence, read N- to C-terminus: Germacrene A hydroxylase (496 aa).

Residues 1–2 (ME) lie on the Cytoplasmic side of the membrane. Residues 3-23 (LTLTTSLGLAVFVFILFKLLT) traverse the membrane as a helical; Signal-anchor for type II membrane protein segment. The Lumenal portion of the chain corresponds to 24-496 (GSKSTKNSLP…TAYKTANNSA (473 aa)). Residue cysteine 432 participates in heme binding. An N-linked (GlcNAc...) asparagine glycan is attached at asparagine 493.

It belongs to the cytochrome P450 family. Requires heme as cofactor.

Its subcellular location is the endoplasmic reticulum membrane. It carries out the reaction (+)-(R)-germacrene A + 3 reduced [NADPH--hemoprotein reductase] + 3 O2 = germacra-1(10),4,11(13)-trien-12-oate + 3 oxidized [NADPH--hemoprotein reductase] + 4 H2O + 4 H(+). Its pathway is secondary metabolite biosynthesis; terpenoid biosynthesis. In terms of biological role, involved in the biosynthesis of germacrene-derived sesquiterpene lactones. Catalyzes three consecutive oxidations of germacrene A to produce germacrene A acid. Could also catalyze the three-step oxidation of non-natural substrate amorphadiene to artemisinic acid. The protein is Germacrene A hydroxylase of Barnadesia spinosa (Spiny barnadesia).